A 384-amino-acid chain; its full sequence is Glucans biosynthesis protein C (384 aa).

The next 10 helical transmembrane spans lie at 17–37 (AWLM…THSW), 54–74 (FIHA…SYML), 91–111 (VGIP…ILLQ), 140–160 (LWFL…FTWF), 173–193 (AISL…YAAI), 212–232 (FIVM…LAFI), 240–260 (FTTP…AYLL), 274–294 (TESV…FSLG), 311–331 (ASLF…AYIT), and 338–358 (LIGF…LYEI).

It belongs to the acyltransferase 3 family. OpgC subfamily.

It is found in the cell membrane. Its pathway is glycan metabolism; osmoregulated periplasmic glucan (OPG) biosynthesis. Necessary for the succinyl substitution of periplasmic glucans. Could catalyze the transfer of succinyl residues from the cytoplasmic side of the membrane to the nascent glucan backbones on the periplasmic side of the membrane. This is Glucans biosynthesis protein C from Salmonella agona (strain SL483).